The primary structure comprises 75 residues: Translation initiation factor IF-1 (75 aa).

In terms of domain architecture, S1-like spans 1–72 (MSKQDLIEME…TKGRITYRLK (72 aa)).

Belongs to the IF-1 family. Component of the 30S ribosomal translation pre-initiation complex which assembles on the 30S ribosome in the order IF-2 and IF-3, IF-1 and N-formylmethionyl-tRNA(fMet); mRNA recruitment can occur at any time during PIC assembly.

It localises to the cytoplasm. Functionally, one of the essential components for the initiation of protein synthesis. Stabilizes the binding of IF-2 and IF-3 on the 30S subunit to which N-formylmethionyl-tRNA(fMet) subsequently binds. Helps modulate mRNA selection, yielding the 30S pre-initiation complex (PIC). Upon addition of the 50S ribosomal subunit IF-1, IF-2 and IF-3 are released leaving the mature 70S translation initiation complex. This Synechocystis sp. (strain ATCC 27184 / PCC 6803 / Kazusa) protein is Translation initiation factor IF-1.